The primary structure comprises 546 residues: 2-succinyl-5-enolpyruvyl-6-hydroxy-3-cyclohexene-1-carboxylate synthase (546 aa).

It belongs to the TPP enzyme family. MenD subfamily. In terms of assembly, homodimer. Requires Mg(2+) as cofactor. It depends on Mn(2+) as a cofactor. Thiamine diphosphate is required as a cofactor.

The enzyme catalyses isochorismate + 2-oxoglutarate + H(+) = 5-enolpyruvoyl-6-hydroxy-2-succinyl-cyclohex-3-ene-1-carboxylate + CO2. The protein operates within quinol/quinone metabolism; 1,4-dihydroxy-2-naphthoate biosynthesis; 1,4-dihydroxy-2-naphthoate from chorismate: step 2/7. Its pathway is quinol/quinone metabolism; menaquinone biosynthesis. Catalyzes the thiamine diphosphate-dependent decarboxylation of 2-oxoglutarate and the subsequent addition of the resulting succinic semialdehyde-thiamine pyrophosphate anion to isochorismate to yield 2-succinyl-5-enolpyruvyl-6-hydroxy-3-cyclohexene-1-carboxylate (SEPHCHC). This is 2-succinyl-5-enolpyruvyl-6-hydroxy-3-cyclohexene-1-carboxylate synthase from Mycolicibacterium smegmatis (strain ATCC 700084 / mc(2)155) (Mycobacterium smegmatis).